The following is a 255-amino-acid chain: tRNA (guanine-N(1)-)-methyltransferase (255 aa).

S-adenosyl-L-methionine contacts are provided by residues glycine 121 and 141–146 (IGDYVL). The tract at residues 236 to 255 (PVKAPNRAGRQKTPKNKTDG) is disordered. The span at 244–255 (GRQKTPKNKTDG) shows a compositional bias: basic residues.

Belongs to the RNA methyltransferase TrmD family. Homodimer.

It localises to the cytoplasm. It carries out the reaction guanosine(37) in tRNA + S-adenosyl-L-methionine = N(1)-methylguanosine(37) in tRNA + S-adenosyl-L-homocysteine + H(+). Functionally, specifically methylates guanosine-37 in various tRNAs. The chain is tRNA (guanine-N(1)-)-methyltransferase from Bradyrhizobium diazoefficiens (strain JCM 10833 / BCRC 13528 / IAM 13628 / NBRC 14792 / USDA 110).